We begin with the raw amino-acid sequence, 190 residues long: HTH-type transcriptional repressor CutR (190 aa).

An HTH deoR-type domain is found at 3 to 58; it reads PINRQQHILKWLKEEGSLRISDISARFGVSEMTVYRDVNQLVQSNQVIKTAGGITL. The segment at residues 20–39 is a DNA-binding region (H-T-H motif); it reads LRISDISARFGVSEMTVYRD.

It localises to the cytoplasm. Its function is as follows. May act as a negative transcriptional regulator of cutJ/ycnJ in the presence of copper. May use copper as a corepressor. This Bacillus subtilis (strain 168) protein is HTH-type transcriptional repressor CutR.